We begin with the raw amino-acid sequence, 651 residues long: Threonine--tRNA ligase (651 aa).

The TGS domain occupies 1-61 (MPTIQLPDGS…DKDVSLRIIT (61 aa)). Positions 242 to 533 (DHRLLAKKMD…LLEESAGKLP (292 aa)) are catalytic. The Zn(2+) site is built by Cys-333, His-384, and His-510. The interval 631–651 (ISQRSRKSPAPSPLFPVGGES) is disordered.

This sequence belongs to the class-II aminoacyl-tRNA synthetase family. In terms of assembly, homodimer. Requires Zn(2+) as cofactor.

Its subcellular location is the cytoplasm. The enzyme catalyses tRNA(Thr) + L-threonine + ATP = L-threonyl-tRNA(Thr) + AMP + diphosphate + H(+). Catalyzes the attachment of threonine to tRNA(Thr) in a two-step reaction: L-threonine is first activated by ATP to form Thr-AMP and then transferred to the acceptor end of tRNA(Thr). Also edits incorrectly charged L-seryl-tRNA(Thr). The sequence is that of Threonine--tRNA ligase from Coxiella burnetii (strain RSA 493 / Nine Mile phase I).